A 466-amino-acid polypeptide reads, in one-letter code: Cysteine--tRNA ligase (466 aa).

Cys-29 is a Zn(2+) binding site. A 'HIGH' region motif is present at residues Ala-31–His-41. Residues Cys-208, His-233, and Glu-237 each contribute to the Zn(2+) site. The 'KMSKS' region motif lies at Lys-264 to Ser-268. Lys-267 contributes to the ATP binding site.

Belongs to the class-I aminoacyl-tRNA synthetase family. In terms of assembly, monomer. Zn(2+) serves as cofactor.

It is found in the cytoplasm. The catalysed reaction is tRNA(Cys) + L-cysteine + ATP = L-cysteinyl-tRNA(Cys) + AMP + diphosphate. This Streptomyces griseus subsp. griseus (strain JCM 4626 / CBS 651.72 / NBRC 13350 / KCC S-0626 / ISP 5235) protein is Cysteine--tRNA ligase.